We begin with the raw amino-acid sequence, 371 residues long: MAELQEVQITEEKPLLPGQTPEAAKEAELAARILLDQGQTHSVETPYGSVTFTVYGTPKPKRPAILTYHDVGLNYKSCFQPLFQFEDMQEIIQNFVRVHVDAPGMEEGAPVFPLGYQYPSLDQLADMIPCVLQYLNFSTIIGVGVGAGAYILARYALNHPDTVEGLVLINIDPNAKGWMDWAAHKLTGLTSSIPEMILGHLFSQEELSGNSELIQKYRNIITHAPNLDNIELYWNSYNNRRDLNFERGGDITLRCPVMLVVGDQAPHEDAVVECNSKLDPTQTSFLKMADSGGQPQLTQPGKLTEAFKYFLQGMGYMASSCMTRLSRSRTASLTSAASVDGNRSRSRTLSQSSESGTLSSGPPGHTMEVSC.

The disordered stretch occupies residues 1–21 (MAELQEVQITEEKPLLPGQTP). Position 2 is an N-acetylalanine (A2). The residue at position 20 (T20) is a Phosphothreonine. A phosphoserine mark is found at S326 and S328. A Phosphothreonine modification is found at T330. A Phosphoserine modification is found at S332. T334 is modified (phosphothreonine). The interval 334–371 (TSAASVDGNRSRSRTLSQSSESGTLSSGPPGHTMEVSC) is disordered. Residues S335, S338, and S344 each carry the phosphoserine modification. Residues 347–361 (RTLSQSSESGTLSSG) show a composition bias toward low complexity. A Phosphothreonine modification is found at T348. S350, S352, S353, and S355 each carry phosphoserine. T357 is modified (phosphothreonine). At S370 the chain carries Phosphoserine.

It belongs to the NDRG family. Interacts with CTNNB1. As to expression, highly expressed in brain, heart, skeletal muscle and salivary gland, and moderately in kidney and liver. Expressed in dendritic cells, but not in other blood cells. Expression levels are low in pancreatic and liver cancer tissues; absent in meningioma. Expressed in low-grade gliomas but present at low levels in glioblastoma. Isoform 1 and isoform 2 are present in brain neurons and up-regulated in Alzheimer disease (at protein level).

The protein resides in the cytoplasm. Its subcellular location is the perinuclear region. The protein localises to the cell projection. It is found in the growth cone. In terms of biological role, contributes to the regulation of the Wnt signaling pathway. Down-regulates CTNNB1-mediated transcriptional activation of target genes, such as CCND1, and may thereby act as tumor suppressor. May be involved in dendritic cell and neuron differentiation. This is Protein NDRG2 (NDRG2) from Homo sapiens (Human).